Consider the following 205-residue polypeptide: Methylthioribulose-1-phosphate dehydratase (205 aa).

Zn(2+) is bound by residues H95 and H97.

It belongs to the aldolase class II family. MtnB subfamily. The cofactor is Zn(2+).

The enzyme catalyses 5-(methylsulfanyl)-D-ribulose 1-phosphate = 5-methylsulfanyl-2,3-dioxopentyl phosphate + H2O. It participates in amino-acid biosynthesis; L-methionine biosynthesis via salvage pathway; L-methionine from S-methyl-5-thio-alpha-D-ribose 1-phosphate: step 2/6. Catalyzes the dehydration of methylthioribulose-1-phosphate (MTRu-1-P) into 2,3-diketo-5-methylthiopentyl-1-phosphate (DK-MTP-1-P). This is Methylthioribulose-1-phosphate dehydratase from Microcystis aeruginosa (strain NIES-843 / IAM M-2473).